The sequence spans 235 residues: Lipoprotein-releasing system ATP-binding protein LolD (235 aa).

In terms of domain architecture, ABC transporter spans 7 to 234; it reads LQCTNLSKRY…QQELTLMGAR (228 aa). 43-50 lines the ATP pocket; the sequence is GSSGSGKS.

Belongs to the ABC transporter superfamily. Lipoprotein translocase (TC 3.A.1.125) family. In terms of assembly, the complex is composed of two ATP-binding proteins (LolD) and two transmembrane proteins (LolC and LolE).

It is found in the cell inner membrane. Functionally, part of the ABC transporter complex LolCDE involved in the translocation of mature outer membrane-directed lipoproteins, from the inner membrane to the periplasmic chaperone, LolA. Responsible for the formation of the LolA-lipoprotein complex in an ATP-dependent manner. The chain is Lipoprotein-releasing system ATP-binding protein LolD from Pectobacterium atrosepticum (strain SCRI 1043 / ATCC BAA-672) (Erwinia carotovora subsp. atroseptica).